The following is a 167-amino-acid chain: N-alpha-acetyltransferase (167 aa).

Residues 12–167 (FTLRNARMDD…EDAYLMARPL (156 aa)) form the N-acetyltransferase domain. Tyr-37 is a substrate binding site. His-88 is a binding site for Zn(2+). Acetyl-CoA contacts are provided by residues 92 to 94 (IAV) and 100 to 105 (RKGIAT). Glu-127 is a binding site for Zn(2+). Acetyl-CoA is bound by residues Asn-132 and 139 to 141 (YEK). Tyr-154 is a binding site for substrate.

Belongs to the acetyltransferase family. ARD1 subfamily. Homodimer.

Its subcellular location is the cytoplasm. It catalyses the reaction N-terminal L-alanyl-[protein] + acetyl-CoA = N-terminal N(alpha)-acetyl-L-alanyl-[protein] + CoA + H(+). The enzyme catalyses N-terminal L-seryl-[protein] + acetyl-CoA = N-terminal N(alpha)-acetyl-L-seryl-[protein] + CoA + H(+). The catalysed reaction is N-terminal L-methionyl-L-leucyl-[protein] + acetyl-CoA = N-terminal N(alpha)-acetyl-L-methionyl-L-leucyl-[protein] + CoA + H(+). It carries out the reaction N-terminal L-methionyl-L-glutamyl-[protein] + acetyl-CoA = N-terminal N(alpha)-acetyl-L-methionyl-L-glutamyl-[protein] + CoA + H(+). Functionally, displays alpha (N-terminal) acetyltransferase activity. Catalyzes the covalent attachment of an acetyl moiety from acetyl-CoA to the free alpha-amino group at the N-terminus of a protein. NAT is able to acetylate the alpha-amino group of methionine, alanine and serine N-terminal residue substrates, however it has a preference for Ser-N-terminal substrates. The sequence is that of N-alpha-acetyltransferase from Saccharolobus solfataricus (strain ATCC 35092 / DSM 1617 / JCM 11322 / P2) (Sulfolobus solfataricus).